The chain runs to 172 residues: Protein-export protein SecB (172 aa).

A disordered region spans residues 152 to 172 (AQGAEGGNSGIVMPDGSQARH).

The protein belongs to the SecB family. In terms of assembly, homotetramer, a dimer of dimers. One homotetramer interacts with 1 SecA dimer.

The protein resides in the cytoplasm. Its function is as follows. One of the proteins required for the normal export of preproteins out of the cell cytoplasm. It is a molecular chaperone that binds to a subset of precursor proteins, maintaining them in a translocation-competent state. It also specifically binds to its receptor SecA. The chain is Protein-export protein SecB from Cupriavidus taiwanensis (strain DSM 17343 / BCRC 17206 / CCUG 44338 / CIP 107171 / LMG 19424 / R1) (Ralstonia taiwanensis (strain LMG 19424)).